Consider the following 256-residue polypeptide: Non-structural protein 1 (256 aa).

Its subcellular location is the host cytoplasm. It is found in the host perinuclear region. Its function is as follows. Plays a role in inhibition of the host innate immune system by counteracting the type I interferon signaling. This chain is Non-structural protein 1, found in Infectious salmon anemia virus (isolate Atlantic salmon/Norway/810/9/99) (ISAV).